A 368-amino-acid chain; its full sequence is o-succinylbenzoate synthase (368 aa).

The active-site Proton donor is Lys183. Residues Asp213, Glu239, and Asp264 each coordinate Mg(2+). Lys290 serves as the catalytic Proton acceptor.

It belongs to the mandelate racemase/muconate lactonizing enzyme family. MenC type 1 subfamily. Monomer. A divalent metal cation is required as a cofactor.

The catalysed reaction is (1R,6R)-6-hydroxy-2-succinyl-cyclohexa-2,4-diene-1-carboxylate = 2-succinylbenzoate + H2O. It functions in the pathway quinol/quinone metabolism; 1,4-dihydroxy-2-naphthoate biosynthesis; 1,4-dihydroxy-2-naphthoate from chorismate: step 4/7. Its pathway is cofactor biosynthesis; phylloquinone biosynthesis. In terms of biological role, converts 2-succinyl-6-hydroxy-2,4-cyclohexadiene-1-carboxylate (SHCHC) to 2-succinylbenzoate (OSB). Does not show N-succinylamino acid racemase (NSAR) activity with N-succinyl-L-phenylglycine as substrate. The sequence is that of o-succinylbenzoate synthase from Desulfotalea psychrophila (strain LSv54 / DSM 12343).